The sequence spans 173 residues: MSEQERETEEDEGVASDTAPMLPRRRPTDYHISVLAPILATRGLGTLVLSGRALVGFLLHLLLPGTVFLLVLLPAAAVVYLGFLCHSRVHPAPGPRCRALLSDRGSAALIVFGLLSLPPLVVLAAAARSLLVRRLRPALPDPARTPAPRRPPRSSGDLADGHPDEDKQLCAWV.

The segment covering 1–14 has biased composition (acidic residues); that stretch reads MSEQERETEEDEGV. The tract at residues 1-25 is disordered; the sequence is MSEQERETEEDEGVASDTAPMLPRR. 3 helical membrane-spanning segments follow: residues 31-51, 53-73, and 107-127; these read HISVLAPILATRGLGTLVLSG, ALVGFLLHLLLPGTVFLLVLL, and AALIVFGLLSLPPLVVLAAAA. The tract at residues 141-165 is disordered; that stretch reads DPARTPAPRRPPRSSGDLADGHPDE.

Belongs to the TMEM88 family.

It is found in the membrane. The protein is Transmembrane protein 278 (Tmem278) of Mus musculus (Mouse).